Reading from the N-terminus, the 126-residue chain is Aspartate 1-decarboxylase (126 aa).

Residue serine 25 is the Schiff-base intermediate with substrate; via pyruvic acid of the active site. Residue serine 25 is modified to Pyruvic acid (Ser). Threonine 57 lines the substrate pocket. The active-site Proton donor is the tyrosine 58. 73-75 (GAA) is a binding site for substrate.

It belongs to the PanD family. Heterooctamer of four alpha and four beta subunits. Pyruvate serves as cofactor. Is synthesized initially as an inactive proenzyme, which is activated by self-cleavage at a specific serine bond to produce a beta-subunit with a hydroxyl group at its C-terminus and an alpha-subunit with a pyruvoyl group at its N-terminus.

The protein resides in the cytoplasm. It carries out the reaction L-aspartate + H(+) = beta-alanine + CO2. Its pathway is cofactor biosynthesis; (R)-pantothenate biosynthesis; beta-alanine from L-aspartate: step 1/1. Catalyzes the pyruvoyl-dependent decarboxylation of aspartate to produce beta-alanine. This Alkalilimnicola ehrlichii (strain ATCC BAA-1101 / DSM 17681 / MLHE-1) protein is Aspartate 1-decarboxylase.